The chain runs to 362 residues: Phospho-N-acetylmuramoyl-pentapeptide-transferase (362 aa).

The next 10 helical transmembrane spans lie at 28-48 (GATVTALLISFLFGPRIIALL), 73-93 (TPTMGGFLILVGLVPSVLLWA), 100-120 (VWIVLFVTLGFGAVGFADDYL), 134-154 (VKLFFEFVIALIAMWALVLVS), 169-189 (TLLIELGGFFFLFGALVIVGS), 201-221 (GLAIVPVMIAAASLGLIVYLV), 241-261 (LAVFCGALIGAGLGFLWYNAP), 264-284 (MVFMGDTGSLALGGALGAIAV), 290-310 (LVLAIIGGLFVLEAVSVIVQV), and 339-359 (TVVVRFWIISVVLAMAGLATL).

It belongs to the glycosyltransferase 4 family. MraY subfamily. The cofactor is Mg(2+).

It localises to the cell inner membrane. It catalyses the reaction UDP-N-acetyl-alpha-D-muramoyl-L-alanyl-gamma-D-glutamyl-meso-2,6-diaminopimeloyl-D-alanyl-D-alanine + di-trans,octa-cis-undecaprenyl phosphate = di-trans,octa-cis-undecaprenyl diphospho-N-acetyl-alpha-D-muramoyl-L-alanyl-D-glutamyl-meso-2,6-diaminopimeloyl-D-alanyl-D-alanine + UMP. Its pathway is cell wall biogenesis; peptidoglycan biosynthesis. In terms of biological role, catalyzes the initial step of the lipid cycle reactions in the biosynthesis of the cell wall peptidoglycan: transfers peptidoglycan precursor phospho-MurNAc-pentapeptide from UDP-MurNAc-pentapeptide onto the lipid carrier undecaprenyl phosphate, yielding undecaprenyl-pyrophosphoryl-MurNAc-pentapeptide, known as lipid I. The sequence is that of Phospho-N-acetylmuramoyl-pentapeptide-transferase from Parvibaculum lavamentivorans (strain DS-1 / DSM 13023 / NCIMB 13966).